The chain runs to 236 residues: 2-C-methyl-D-erythritol 4-phosphate cytidylyltransferase (236 aa).

Belongs to the IspD/TarI cytidylyltransferase family. IspD subfamily. As to quaternary structure, homodimer.

The enzyme catalyses 2-C-methyl-D-erythritol 4-phosphate + CTP + H(+) = 4-CDP-2-C-methyl-D-erythritol + diphosphate. The protein operates within isoprenoid biosynthesis; isopentenyl diphosphate biosynthesis via DXP pathway; isopentenyl diphosphate from 1-deoxy-D-xylulose 5-phosphate: step 2/6. Its function is as follows. Catalyzes the formation of 4-diphosphocytidyl-2-C-methyl-D-erythritol from CTP and 2-C-methyl-D-erythritol 4-phosphate (MEP). The sequence is that of 2-C-methyl-D-erythritol 4-phosphate cytidylyltransferase from Cronobacter sakazakii (strain ATCC BAA-894) (Enterobacter sakazakii).